A 511-amino-acid polypeptide reads, in one-letter code: Serine/threonine-protein kinase Nek3 (511 aa).

Met1 bears the N-acetylmethionine mark. The interaction with VAV2 stretch occupies residues 1–282 (MDNYTVLRVI…EQILDEIKIS (282 aa)). The 252-residue stretch at 4-255 (YTVLRVIGQG…ATTLLCRGSL (252 aa)) folds into the Protein kinase domain. Residues 10–18 (IGQGSFGRA) and Lys33 each bind ATP. The active-site Proton acceptor is Asp125. Thr159 carries the post-translational modification Phosphothreonine; by autocatalysis. Disordered regions lie at residues 299–370 (LGEA…GPSS) and 443–511 (GPLS…GERA). Residues 309–321 (EEERGRKCSHTEL) are compositionally biased toward basic and acidic residues. Positions 472-485 (LDEEDTDFEEDNEN) are enriched in acidic residues. Thr477 carries the phosphothreonine modification. The span at 498–511 (YGDGPGGQLLGERA) shows a compositional bias: gly residues.

Belongs to the protein kinase superfamily. NEK Ser/Thr protein kinase family. NIMA subfamily. In terms of assembly, interacts with PXN, PRLR, VAV1 and VAV2 and this interaction is prolactin-dependent. It depends on Mg(2+) as a cofactor. In terms of processing, phosphorylation at Thr-477 regulates its catalytic activity. As to expression, brain.

Its subcellular location is the cytoplasm. It localises to the cell projection. The protein resides in the axon. The enzyme catalyses L-seryl-[protein] + ATP = O-phospho-L-seryl-[protein] + ADP + H(+). The catalysed reaction is L-threonyl-[protein] + ATP = O-phospho-L-threonyl-[protein] + ADP + H(+). Protein kinase which influences neuronal morphogenesis and polarity through effects on microtubules. Regulates microtubule acetylation in neurons. Contributes to prolactin-mediated phosphorylation of PXN and VAV2. This chain is Serine/threonine-protein kinase Nek3 (Nek3), found in Mus musculus (Mouse).